We begin with the raw amino-acid sequence, 395 residues long: Succinyl-diaminopimelate desuccinylase (395 aa).

Histidine 74 is a Zn(2+) binding site. Aspartate 76 is a catalytic residue. Aspartate 107 provides a ligand contact to Zn(2+). Glutamate 141 serves as the catalytic Proton acceptor. Zn(2+) contacts are provided by glutamate 142, glutamate 170, and histidine 368.

Belongs to the peptidase M20A family. DapE subfamily. In terms of assembly, homodimer. The cofactor is Zn(2+). Requires Co(2+) as cofactor.

It carries out the reaction N-succinyl-(2S,6S)-2,6-diaminopimelate + H2O = (2S,6S)-2,6-diaminopimelate + succinate. Its pathway is amino-acid biosynthesis; L-lysine biosynthesis via DAP pathway; LL-2,6-diaminopimelate from (S)-tetrahydrodipicolinate (succinylase route): step 3/3. Its function is as follows. Catalyzes the hydrolysis of N-succinyl-L,L-diaminopimelic acid (SDAP), forming succinate and LL-2,6-diaminopimelate (DAP), an intermediate involved in the bacterial biosynthesis of lysine and meso-diaminopimelic acid, an essential component of bacterial cell walls. The chain is Succinyl-diaminopimelate desuccinylase from Brucella melitensis biotype 2 (strain ATCC 23457).